The following is a 219-amino-acid chain: UPF0173 metal-dependent hydrolase LSL_0324 (219 aa).

It belongs to the UPF0173 family.

The protein is UPF0173 metal-dependent hydrolase LSL_0324 of Ligilactobacillus salivarius (strain UCC118) (Lactobacillus salivarius).